We begin with the raw amino-acid sequence, 356 residues long: Probable D-xylulose reductase A (356 aa).

Zn(2+) is bound by residues cysteine 45, histidine 70, and glutamate 71. 180–185 contributes to the NAD(+) binding site; it reads GAGPVG.

It belongs to the zinc-containing alcohol dehydrogenase family. It depends on Zn(2+) as a cofactor.

It catalyses the reaction xylitol + NAD(+) = D-xylulose + NADH + H(+). The protein operates within carbohydrate degradation; L-arabinose degradation via L-arabinitol; D-xylulose 5-phosphate from L-arabinose (fungal route): step 4/5. Xylitol dehydrogenase which catalyzes the conversion of xylitol to D-xylulose. Xylose is a major component of hemicelluloses such as xylan. Most fungi utilize D-xylose via three enzymatic reactions, xylose reductase (XR), xylitol dehydrogenase (XDH), and xylulokinase, to form xylulose 5-phosphate, which enters pentose phosphate pathway. The protein is Probable D-xylulose reductase A (xdhA) of Arthroderma otae (strain ATCC MYA-4605 / CBS 113480) (Microsporum canis).